A 315-amino-acid chain; its full sequence is ATP synthase gamma chain (315 aa).

This sequence belongs to the ATPase gamma chain family. F-type ATPases have 2 components, CF(1) - the catalytic core - and CF(0) - the membrane proton channel. CF(1) has five subunits: alpha(3), beta(3), gamma(1), delta(1), epsilon(1). CF(0) has three main subunits: a, b and c.

Its subcellular location is the cellular thylakoid membrane. Its function is as follows. Produces ATP from ADP in the presence of a proton gradient across the membrane. The gamma chain is believed to be important in regulating ATPase activity and the flow of protons through the CF(0) complex. In Nostoc punctiforme (strain ATCC 29133 / PCC 73102), this protein is ATP synthase gamma chain.